The following is a 525-amino-acid chain: Zinc finger protein 678 (525 aa).

C2H2-type zinc fingers lie at residues 97 to 119, 125 to 147, 153 to 175, 181 to 203, 209 to 231, 237 to 259, 265 to 287, 293 to 315, 321 to 343, 349 to 371, 377 to 399, 405 to 427, 433 to 455, and 461 to 483; these read FQCIECGRNFSWRSILTEHKRIH, YKCEECGKVFNRCSNLTKHKRIH, YKCDECGKVFNWWSQLTNHKKIH, YKCDECDKVFNWWSQLTSHKKIH, YPCEECGKAFTQFSNLTQHKRIH, YKCKECCKAFNKFSNLTQHKRIH, YKCEECGNVFNECSHLTRHRRIH, YKCEECGKAFTQFASLTRHKRIH, YQCEECGKTFNRCSHLSSHKRIH, YKCEECGRTFTQFSNLTQHKRIH, YKCKECGKAFNKFSSLTQHRRIH, YKCEECGKVFKQCSHLTSHKRIH, YKCKECGKAFYQSSILSKHKRIH, and YKCEECGKAFNQFSSLTRHKRIH. The segment at 489–511 adopts a C2H2-type 15; degenerate zinc-finger fold; that stretch reads YKCKECGKGFYQSSIHSKYKRIY.

This sequence belongs to the krueppel C2H2-type zinc-finger protein family.

It is found in the nucleus. Functionally, may be involved in transcriptional regulation. The sequence is that of Zinc finger protein 678 (ZNF678) from Homo sapiens (Human).